We begin with the raw amino-acid sequence, 222 residues long: Large ribosomal subunit protein uL4 (222 aa).

The interval 42 to 100 (AAGRQGTHSTKTRGEVRGGGKKPYRQKGTGRARQGSVRAPQFTGGGTVHGPKPRDYAQR) is disordered. The segment covering 60 to 71 (GGKKPYRQKGTG) has biased composition (basic residues).

Belongs to the universal ribosomal protein uL4 family. In terms of assembly, part of the 50S ribosomal subunit.

Its function is as follows. One of the primary rRNA binding proteins, this protein initially binds near the 5'-end of the 23S rRNA. It is important during the early stages of 50S assembly. It makes multiple contacts with different domains of the 23S rRNA in the assembled 50S subunit and ribosome. In terms of biological role, forms part of the polypeptide exit tunnel. In Thermobifida fusca (strain YX), this protein is Large ribosomal subunit protein uL4.